The following is a 181-amino-acid chain: Acireductone dioxygenase (181 aa).

Histidine 97, histidine 99, glutamate 103, and histidine 141 together coordinate Fe(2+). Ni(2+) contacts are provided by histidine 97, histidine 99, glutamate 103, and histidine 141.

This sequence belongs to the acireductone dioxygenase (ARD) family. Monomer. The cofactor is Fe(2+). Ni(2+) serves as cofactor.

It catalyses the reaction 1,2-dihydroxy-5-(methylsulfanyl)pent-1-en-3-one + O2 = 3-(methylsulfanyl)propanoate + CO + formate + 2 H(+). It carries out the reaction 1,2-dihydroxy-5-(methylsulfanyl)pent-1-en-3-one + O2 = 4-methylsulfanyl-2-oxobutanoate + formate + 2 H(+). The protein operates within amino-acid biosynthesis; L-methionine biosynthesis via salvage pathway; L-methionine from S-methyl-5-thio-alpha-D-ribose 1-phosphate: step 5/6. Functionally, catalyzes 2 different reactions between oxygen and the acireductone 1,2-dihydroxy-3-keto-5-methylthiopentene (DHK-MTPene) depending upon the metal bound in the active site. Fe-containing acireductone dioxygenase (Fe-ARD) produces formate and 2-keto-4-methylthiobutyrate (KMTB), the alpha-ketoacid precursor of methionine in the methionine recycle pathway. Ni-containing acireductone dioxygenase (Ni-ARD) produces methylthiopropionate, carbon monoxide and formate, and does not lie on the methionine recycle pathway. This Pseudomonas savastanoi pv. phaseolicola (strain 1448A / Race 6) (Pseudomonas syringae pv. phaseolicola (strain 1448A / Race 6)) protein is Acireductone dioxygenase.